The following is a 515-amino-acid chain: Glucose-6-phosphate 1-dehydrogenase (515 aa).

At alanine 2 the chain carries N-acetylalanine. A Phosphoserine modification is found at serine 8. Threonine 10 is modified (phosphothreonine). Phosphoserine is present on phenylalanine 26. Residues 38 to 45 and arginine 72 contribute to the NADP(+) site; that span reads GASGDLAK. Lysine 89 is subject to N6-acetyllysine. 2 residues coordinate NADP(+): tyrosine 147 and lysine 171. Residues lysine 171, 201 to 205, glutamate 239, and aspartate 258 contribute to the D-glucose 6-phosphate site; that span reads HYLGK. N6-(2-hydroxyisobutyryl)lysine; alternate is present on lysine 171. Position 171 is an N6-acetyllysine; alternate (lysine 171). The Proton acceptor role is filled by histidine 263. Residue arginine 357 participates in NADP(+) binding. Lysine 360 and arginine 365 together coordinate D-glucose 6-phosphate. Residues lysine 366, arginine 370, and arginine 393 each contribute to the NADP(+) site. Glutamine 395 is a binding site for D-glucose 6-phosphate. NADP(+) contacts are provided by residues 401-403 and 421-423; these read YTK and DLT. N6-acetyllysine is present on lysine 403. Position 432 is an N6-acetyllysine (lysine 432). Position 487 (arginine 487) interacts with NADP(+). Lysine 497 is modified (N6-acetyllysine). The NADP(+) site is built by tyrosine 503 and tryptophan 509. A Phosphotyrosine modification is found at tyrosine 503.

This sequence belongs to the glucose-6-phosphate dehydrogenase family. In terms of assembly, homotetramer; dimer of dimers. Interacts with SIRT2; the interaction is enhanced by H(2)O(2) treatment. Forms a ternary complex with ALDOB and TP53; this interaction is direct. ALDOB stabilizes the complex inhibiting G6PD activity and keeping oxidative pentose phosphate metabolism in check. Acetylated by ELP3 at Lys-403; acetylation inhibits its homodimerization and enzyme activity. Deacetylated by SIRT2 at Lys-403; deacetylation stimulates its enzyme activity. Isoform Long is found in lymphoblasts, granulocytes and sperm.

The protein resides in the cytoplasm. It localises to the cytosol. It is found in the membrane. It catalyses the reaction D-glucose 6-phosphate + NADP(+) = 6-phospho-D-glucono-1,5-lactone + NADPH + H(+). It participates in carbohydrate degradation; pentose phosphate pathway; D-ribulose 5-phosphate from D-glucose 6-phosphate (oxidative stage): step 1/3. In terms of biological role, catalyzes the rate-limiting step of the oxidative pentose-phosphate pathway, which represents a route for the dissimilation of carbohydrates besides glycolysis. The main function of this enzyme is to provide reducing power (NADPH) and pentose phosphates for fatty acid and nucleic acid synthesis. The sequence is that of Glucose-6-phosphate 1-dehydrogenase (G6PD) from Homo sapiens (Human).